The following is a 149-amino-acid chain: Leghemoglobin (149 aa).

In terms of domain architecture, Globin spans 3-147; it reads AFSEKQESLV…LAAAIKKAMG (145 aa). Position 31 is a nitrated tyrosine (Y31). Position 46 (S46) interacts with heme b. A Phosphoserine modification is found at S46. O2 is bound at residue H62. Residues K65, H94, and K97 each coordinate heme b. Y135 is subject to Nitrated tyrosine.

It belongs to the plant globin family. In terms of assembly, monomer. Nitrated in effective nodules and particularly in hypoxic conditions; this mechanism may play a protective role in the symbiosis by buffering toxic peroxynitrite NO(2)(-). Nitration level decrease during nodule senescence. Post-translationally, phosphorylation at Ser-46 disrupts the molecular environment of its porphyrin ring oxygen binding pocket, thus leading to a reduced oxygen consumption and to the delivery of oxygen O(2) to symbiosomes. As to expression, root nodules.

The protein localises to the cytoplasm. The protein resides in the cytosol. It is found in the nucleus. Its function is as follows. Leghemoglobin that reversibly binds oxygen O(2) through a pentacoordinated heme iron. In root nodules, facilitates the diffusion of oxygen to the bacteroids while preventing the bacterial nitrogenase from being inactivated by buffering dioxygen, nitric oxide and carbon monoxide, and promoting the formation of reactive oxygen species (ROS, e.g. H(2)O(2)). This role is essential for symbiotic nitrogen fixation (SNF). The polypeptide is Leghemoglobin (Canavalia lineata (Beach bean)).